A 242-amino-acid chain; its full sequence is Lactate utilization protein A 2 (242 aa).

Belongs to the LutA/YkgE family.

In terms of biological role, is involved in L-lactate degradation and allows cells to grow with lactate as the sole carbon source. In Bacillus cereus (strain ZK / E33L), this protein is Lactate utilization protein A 2.